Reading from the N-terminus, the 208-residue chain is Putative dioxygenase RC0543 (208 aa).

It belongs to the intradiol ring-cleavage dioxygenase family.

This chain is Putative dioxygenase RC0543, found in Rickettsia conorii (strain ATCC VR-613 / Malish 7).